The following is a 302-amino-acid chain: Heat stress transcription factor B-1 (302 aa).

Positions 1 to 15 are enriched in low complexity; sequence MAAAEAAAAVGKQQQ. Disordered regions lie at residues 1-33 and 116-184; these read MAAA…PFLT and GIRR…RKDN. Residues 16–28 are compositionally biased toward gly residues; sequence KGGGGRGGGGGGP. Residues 123-133 are compositionally biased toward polar residues; sequence TTPQSSKSCGS. The segment covering 139-150 has biased composition (pro residues); it reads FPPPLPPLPPEP. Over residues 151–172 the composition is skewed to low complexity; sequence SATTSSGNDRSSSSASSPPRAD. Residues 170 to 202 are a coiled coil; that stretch reads RADITSENEQLRKDNQTLTMELARARRHCEELL. The hydrophobic repeat HR-A/B stretch occupies residues 180–209; it reads LRKDNQTLTMELARARRHCEELLGFLSRFL. Positions 211–218 match the Nuclear export signal motif; it reads VRQLDLRL. A Nuclear localization signal motif is present at residues 263 to 267; it reads RKRAR.

This sequence belongs to the HSF family. Class B subfamily. As to quaternary structure, homotrimer. In terms of processing, exhibits temperature-dependent phosphorylation.

Its subcellular location is the cytoplasm. It is found in the nucleus. Its function is as follows. Transcriptional regulator that specifically binds DNA of heat shock promoter elements (HSE). This is Heat stress transcription factor B-1 (HSFB1) from Oryza sativa subsp. japonica (Rice).